A 333-amino-acid polypeptide reads, in one-letter code: Glyceraldehyde-3-phosphate dehydrogenase 1 (333 aa).

NAD(+)-binding positions include 12–13, aspartate 35, and arginine 79; that span reads RI. Residues 152–154, threonine 183, arginine 198, 211–212, and arginine 234 contribute to the D-glyceraldehyde 3-phosphate site; these read SCT and SG. The active-site Nucleophile is cysteine 153. Residue asparagine 314 coordinates NAD(+).

The protein belongs to the glyceraldehyde-3-phosphate dehydrogenase family. As to quaternary structure, homotetramer.

The protein localises to the cytoplasm. It carries out the reaction D-glyceraldehyde 3-phosphate + phosphate + NAD(+) = (2R)-3-phospho-glyceroyl phosphate + NADH + H(+). The protein operates within carbohydrate degradation; glycolysis; pyruvate from D-glyceraldehyde 3-phosphate: step 1/5. With respect to regulation, resistant to pentalenolactone (PL). Catalyzes the oxidative phosphorylation of glyceraldehyde 3-phosphate (G3P) to 1,3-bisphosphoglycerate (BPG) using the cofactor NAD. The first reaction step involves the formation of a hemiacetal intermediate between G3P and a cysteine residue, and this hemiacetal intermediate is then oxidized to a thioester, with concomitant reduction of NAD to NADH. The reduced NADH is then exchanged with the second NAD, and the thioester is attacked by a nucleophilic inorganic phosphate to produce BPG. The polypeptide is Glyceraldehyde-3-phosphate dehydrogenase 1 (gap1) (Streptomyces arenae).